The following is a 192-amino-acid chain: Large ribosomal subunit protein bL9 (192 aa).

The disordered stretch occupies residues 172 to 192; that stretch reads DALRPEDFFDPEADGVDEDEA. Acidic residues predominate over residues 179-192; the sequence is FFDPEADGVDEDEA.

Belongs to the bacterial ribosomal protein bL9 family.

Its function is as follows. Binds to the 23S rRNA. The polypeptide is Large ribosomal subunit protein bL9 (Rhizobium johnstonii (strain DSM 114642 / LMG 32736 / 3841) (Rhizobium leguminosarum bv. viciae)).